Here is a 251-residue protein sequence, read N- to C-terminus: Pyruvate formate-lyase-activating enzyme (251 aa).

Residues Val-15–Asn-244 form the Radical SAM core domain. Positions 29, 33, and 36 each coordinate [4Fe-4S] cluster. S-adenosyl-L-methionine-binding positions include Tyr-35–His-37, Gly-79, Asp-134–Lys-136, and His-207.

The protein belongs to the organic radical-activating enzymes family. It depends on [4Fe-4S] cluster as a cofactor.

The protein localises to the cytoplasm. It carries out the reaction glycyl-[formate C-acetyltransferase] + reduced [flavodoxin] + S-adenosyl-L-methionine = glycin-2-yl radical-[formate C-acetyltransferase] + semiquinone [flavodoxin] + 5'-deoxyadenosine + L-methionine + H(+). Its function is as follows. Activation of pyruvate formate-lyase under anaerobic conditions by generation of an organic free radical, using S-adenosylmethionine and reduced flavodoxin as cosubstrates to produce 5'-deoxy-adenosine. This chain is Pyruvate formate-lyase-activating enzyme (pflA), found in Staphylococcus epidermidis (strain ATCC 12228 / FDA PCI 1200).